Here is a 292-residue protein sequence, read N- to C-terminus: Acetylglutamate kinase (292 aa).

Residues 64–65, R86, and N190 contribute to the substrate site; that span reads GG.

Belongs to the acetylglutamate kinase family. ArgB subfamily.

Its subcellular location is the cytoplasm. It carries out the reaction N-acetyl-L-glutamate + ATP = N-acetyl-L-glutamyl 5-phosphate + ADP. The protein operates within amino-acid biosynthesis; L-arginine biosynthesis; N(2)-acetyl-L-ornithine from L-glutamate: step 2/4. Its function is as follows. Catalyzes the ATP-dependent phosphorylation of N-acetyl-L-glutamate. This is Acetylglutamate kinase from Geobacter sulfurreducens (strain ATCC 51573 / DSM 12127 / PCA).